A 460-amino-acid chain; its full sequence is GTPase Der (460 aa).

EngA-type G domains are found at residues lysine 2 to isoleucine 164 and isoleucine 199 to threonine 370. Residues glycine 8–serine 15, aspartate 55–leucine 59, asparagine 116–aspartate 119, glycine 205–serine 212, aspartate 252–isoleucine 256, and asparagine 316–aspartate 319 each bind GTP. The region spanning glutamine 371–glycine 454 is the KH-like domain.

This sequence belongs to the TRAFAC class TrmE-Era-EngA-EngB-Septin-like GTPase superfamily. EngA (Der) GTPase family. As to quaternary structure, associates with the 50S ribosomal subunit.

Its function is as follows. GTPase that plays an essential role in the late steps of ribosome biogenesis. This chain is GTPase Der, found in Campylobacter hominis (strain ATCC BAA-381 / DSM 21671 / CCUG 45161 / LMG 19568 / NCTC 13146 / CH001A).